The primary structure comprises 325 residues: Probable serine/threonine-protein phosphatase 2A activator 1 (325 aa).

The protein belongs to the PTPA-type PPIase family.

The protein resides in the cytoplasm. The catalysed reaction is [protein]-peptidylproline (omega=180) = [protein]-peptidylproline (omega=0). In terms of biological role, PPIases accelerate the folding of proteins. It catalyzes the cis-trans isomerization of proline imidic peptide bonds in oligopeptides. Acts as a regulatory subunit for PP2A-like phosphatases modulating their activity or substrate specificity, probably by inducing a conformational change in the catalytic subunit, a direct target of the PPIase. The polypeptide is Probable serine/threonine-protein phosphatase 2A activator 1 (ppp2r4A) (Dictyostelium discoideum (Social amoeba)).